Reading from the N-terminus, the 63-residue chain is Large ribosomal subunit protein uL29 (63 aa).

Belongs to the universal ribosomal protein uL29 family.

The protein is Large ribosomal subunit protein uL29 of Flavobacterium johnsoniae (strain ATCC 17061 / DSM 2064 / JCM 8514 / BCRC 14874 / CCUG 350202 / NBRC 14942 / NCIMB 11054 / UW101) (Cytophaga johnsonae).